Consider the following 399-residue polypeptide: Imidazolonepropionase (399 aa).

His-68 and His-70 together coordinate Fe(3+). 2 residues coordinate Zn(2+): His-68 and His-70. 4-imidazolone-5-propanoate-binding residues include Arg-77, Tyr-140, and His-173. N-formimidoyl-L-glutamate is bound at residue Tyr-140. His-238 contributes to the Fe(3+) binding site. A Zn(2+)-binding site is contributed by His-238. Gln-241 provides a ligand contact to 4-imidazolone-5-propanoate. Asp-313 contributes to the Fe(3+) binding site. Zn(2+) is bound at residue Asp-313. N-formimidoyl-L-glutamate-binding residues include Asn-315 and Gly-317. A 4-imidazolone-5-propanoate-binding site is contributed by Thr-318.

Belongs to the metallo-dependent hydrolases superfamily. HutI family. The cofactor is Zn(2+). Requires Fe(3+) as cofactor.

Its subcellular location is the cytoplasm. The enzyme catalyses 4-imidazolone-5-propanoate + H2O = N-formimidoyl-L-glutamate. It functions in the pathway amino-acid degradation; L-histidine degradation into L-glutamate; N-formimidoyl-L-glutamate from L-histidine: step 3/3. Its function is as follows. Catalyzes the hydrolytic cleavage of the carbon-nitrogen bond in imidazolone-5-propanoate to yield N-formimidoyl-L-glutamate. It is the third step in the universal histidine degradation pathway. The polypeptide is Imidazolonepropionase (Rhizorhabdus wittichii (strain DSM 6014 / CCUG 31198 / JCM 15750 / NBRC 105917 / EY 4224 / RW1) (Sphingomonas wittichii)).